A 263-amino-acid polypeptide reads, in one-letter code: HTH-type transcriptional repressor NanR (263 aa).

Residues 1–22 form a disordered region; the sequence is MGLMNAFDSQTEDSSPAIGRNL. Residues 30 to 98 form the HTH gntR-type domain; that stretch reads KKLSEMVEEE…NGERARVSRP (69 aa). The H-T-H motif DNA-binding region spans 58-77; that stretch reads ERELMAFFNVGRPSVREALA.

Belongs to the NanR family.

Functionally, transcriptional repressor that controls expression of the genes required for the catabolism of sialic acids. The chain is HTH-type transcriptional repressor NanR from Escherichia coli (strain 55989 / EAEC).